The primary structure comprises 462 residues: UDP-N-acetylmuramoylalanine--D-glutamate ligase (462 aa).

Residue 112 to 118 (GTNGKTT) participates in ATP binding.

It belongs to the MurCDEF family.

The protein resides in the cytoplasm. It carries out the reaction UDP-N-acetyl-alpha-D-muramoyl-L-alanine + D-glutamate + ATP = UDP-N-acetyl-alpha-D-muramoyl-L-alanyl-D-glutamate + ADP + phosphate + H(+). Its pathway is cell wall biogenesis; peptidoglycan biosynthesis. Cell wall formation. Catalyzes the addition of glutamate to the nucleotide precursor UDP-N-acetylmuramoyl-L-alanine (UMA). This Nostoc sp. (strain PCC 7120 / SAG 25.82 / UTEX 2576) protein is UDP-N-acetylmuramoylalanine--D-glutamate ligase.